A 551-amino-acid polypeptide reads, in one-letter code: Glucans biosynthesis protein D (551 aa).

The segment at residues 1-32 (MNRRRFIKGSMAMAAVCGSSGIASLFSQAAFA) is a signal peptide (tat-type signal).

This sequence belongs to the OpgD/OpgG family. In terms of processing, predicted to be exported by the Tat system. The position of the signal peptide cleavage has not been experimentally proven.

The protein resides in the periplasm. It participates in glycan metabolism; osmoregulated periplasmic glucan (OPG) biosynthesis. Functionally, probably involved in the control of the structural glucose backbone of osmoregulated periplasmic glucans (OPGs). The polypeptide is Glucans biosynthesis protein D (Salmonella paratyphi A (strain ATCC 9150 / SARB42)).